The chain runs to 698 residues: Elongation factor G (698 aa).

One can recognise a tr-type G domain in the interval 10 to 285 (AGTRNIGIMA…AVVDFLPNPL (276 aa)). Residues 19-26 (AHIDAGKT), 83-87 (DTPGH), and 137-140 (NKMD) contribute to the GTP site.

The protein belongs to the TRAFAC class translation factor GTPase superfamily. Classic translation factor GTPase family. EF-G/EF-2 subfamily.

The protein resides in the cytoplasm. In terms of biological role, catalyzes the GTP-dependent ribosomal translocation step during translation elongation. During this step, the ribosome changes from the pre-translocational (PRE) to the post-translocational (POST) state as the newly formed A-site-bound peptidyl-tRNA and P-site-bound deacylated tRNA move to the P and E sites, respectively. Catalyzes the coordinated movement of the two tRNA molecules, the mRNA and conformational changes in the ribosome. The chain is Elongation factor G from Frankia casuarinae (strain DSM 45818 / CECT 9043 / HFP020203 / CcI3).